The primary structure comprises 190 residues: GTP cyclohydrolase 1 (190 aa).

Positions 80, 83, and 151 each coordinate Zn(2+).

It belongs to the GTP cyclohydrolase I family. Toroid-shaped homodecamer, composed of two pentamers of five dimers.

The catalysed reaction is GTP + H2O = 7,8-dihydroneopterin 3'-triphosphate + formate + H(+). It participates in cofactor biosynthesis; 7,8-dihydroneopterin triphosphate biosynthesis; 7,8-dihydroneopterin triphosphate from GTP: step 1/1. This chain is GTP cyclohydrolase 1, found in Rickettsia akari (strain Hartford).